A 319-amino-acid chain; its full sequence is Ornithine carbamoyltransferase (319 aa).

Residues 57–60 (STRT), glutamine 84, arginine 108, and 135–138 (HPCQ) each bind carbamoyl phosphate. Residues asparagine 166, aspartate 230, and 234-235 (SM) contribute to the L-ornithine site. Carbamoyl phosphate-binding positions include 270–271 (CL) and arginine 298.

The protein belongs to the aspartate/ornithine carbamoyltransferase superfamily. OTCase family.

It localises to the cytoplasm. It catalyses the reaction carbamoyl phosphate + L-ornithine = L-citrulline + phosphate + H(+). The protein operates within amino-acid biosynthesis; L-arginine biosynthesis; L-arginine from L-ornithine and carbamoyl phosphate: step 1/3. Its function is as follows. Reversibly catalyzes the transfer of the carbamoyl group from carbamoyl phosphate (CP) to the N(epsilon) atom of ornithine (ORN) to produce L-citrulline. The polypeptide is Ornithine carbamoyltransferase (argF) (Bacillus subtilis (strain 168)).